A 329-amino-acid polypeptide reads, in one-letter code: uncharacterized protein (329 aa).

Residues S284 to S303 form a disordered region.

This is an uncharacterized protein from Methanocaldococcus jannaschii (strain ATCC 43067 / DSM 2661 / JAL-1 / JCM 10045 / NBRC 100440) (Methanococcus jannaschii).